Reading from the N-terminus, the 147-residue chain is Siroheme decarboxylase NirG subunit (147 aa).

It belongs to the Ahb/Nir family. Probably forms a complex composed of NirD, NirL, NirG and NirH. All proteins are required for the total conversion of siroheme to didecarboxysiroheme.

It catalyses the reaction siroheme + 2 H(+) = 12,18-didecarboxysiroheme + 2 CO2. It functions in the pathway porphyrin-containing compound metabolism. Involved in heme d1 biosynthesis. Catalyzes the decarboxylation of siroheme into didecarboxysiroheme. The chain is Siroheme decarboxylase NirG subunit from Pseudomonas aeruginosa (strain ATCC 15692 / DSM 22644 / CIP 104116 / JCM 14847 / LMG 12228 / 1C / PRS 101 / PAO1).